We begin with the raw amino-acid sequence, 84 residues long: uncharacterized protein (84 aa).

Positions 1–83 (MDDKFTTLPC…CKQAVFVYKI (83 aa)) constitute an LITAF domain. Zn(2+) contacts are provided by cysteine 21 and cysteine 24. Residues 39–61 (MSWVVCTAITLACLPCCCIPFLC) are membrane-binding amphipathic helix. Positions 71 and 74 each coordinate Zn(2+).

Its subcellular location is the host membrane. This is an uncharacterized protein from Dryophytes versicolor (chameleon treefrog).